A 676-amino-acid polypeptide reads, in one-letter code: Period circadian protein (676 aa).

Residues 1–34 (KVSDSAYSNSCSNSQSQRSGSSKSRLSGSHSSGS) are compositionally biased toward low complexity. The tract at residues 1 to 161 (KVSDSAYSNS…AAQSFPIPSP (161 aa)) is disordered. Positions 53-66 (KRNKDKSRKKKKNK) match the Nuclear localization signal motif. The span at 53-66 (KRNKDKSRKKKKNK) shows a compositional bias: basic residues. Residues 108–120 (ELQDQQHGEDHSE) are compositionally biased toward basic and acidic residues. PAS domains are found at residues 224-359 (DSFC…ATPI) and 377-483 (FAIR…RVFQ). Residues 583-676 (TNTSIAGTGG…VTLTESLLNK (94 aa)) form a disordered region. A run of 26 repeats spans residues 589–590 (GT), 592–593 (GT), 594–595 (GT), 596–597 (GT), 598–599 (GT), 600–601 (GT), 602–603 (GT), 604–605 (GT), 606–607 (GT), 608–609 (GT), 610–611 (GT), 612–613 (GT), 614–615 (GT), 616–617 (GT), 618–619 (GT), 620–621 (GT), 622–623 (GT), 624–625 (GT), 626–627 (GT), 628–629 (GT), 630–631 (GT), 632–633 (GT), 634–635 (GT), 636–637 (GT), 638–639 (GT), and 640–641 (GT). Residues 589–643 (GTGGTGTGTGTGTGTGTGTGTGTGTGTGTGTGTGTGTGTGTGTGTGTGTGTGTGN) show a composition bias toward gly residues. Positions 589–645 (GTGGTGTGTGTGTGTGTGTGTGTGTGTGTGTGTGTGTGTGTGTGTGTGTGTGTGNGT) are 28 X 2 AA approximate tandem repeats of G-T. One copy of the 27; approximate repeat lies at 642 to 643 (GN). Repeat 28 spans residues 644 to 645 (GT). The span at 644-654 (GTNSCTGTGTT) shows a compositional bias: low complexity.

As to quaternary structure, forms a heterodimer with timeless (TIM); the complex then translocates into the nucleus. Post-translationally, phosphorylated with a circadian rhythmicity, probably by the double-time protein (dbt). Phosphorylation could be implicated in the stability of per monomer and in the formation of heterodimer per-tim.

It is found in the nucleus. The protein localises to the cytoplasm. It localises to the perinuclear region. In terms of biological role, essential for biological clock functions. Determines the period length of circadian and ultradian rhythms; an increase in PER dosage leads to shortened circadian rhythms and a decrease leads to lengthened circadian rhythms. Essential for the circadian rhythmicity of locomotor activity, eclosion behavior, and for the rhythmic component of the male courtship song that originates in the thoracic nervous system. The biological cycle depends on the rhythmic formation and nuclear localization of the TIM-PER complex. Light induces the degradation of TIM, which promotes elimination of PER. Nuclear activity of the heterodimer coordinatively regulates PER and TIM transcription through a negative feedback loop. Behaves as a negative element in circadian transcriptional loop. Does not appear to bind DNA, suggesting indirect transcriptional inhibition. The chain is Period circadian protein (per) from Drosophila mauritiana (Fruit fly).